The primary structure comprises 313 residues: MNQLFGSDKLRLPQRAQAGIAFVRYLIARMNHDRINVNAGYLAYITLLSIVPMLTVLLSILSKFSVFENVGSVLQSFIINNFVPASGDAVHAALQEFIANTGKMTAVGAAFLFVAALMLISNIDKNLNYIWRVKKKRRAVFSFSMYWMVLTLGPILVGASIAATSYITSLRLLDSEAISTVYDQLLRWLPFILSSSAFVGLYLLVPNKKVQFSHAVVGAMIAAVLFELSKKGFAAYITQFPSYQLIYGALAAIPILFVWVYLCWLIVLIGAEVTAALGEREHWRPAEDVIQSLPNNDTELEKDTQRDRFDSES.

6 consecutive transmembrane segments (helical) span residues 41–61 (YLAYITLLSIVPMLTVLLSIL), 104–124 (MTAVGAAFLFVAALMLISNID), 139–159 (AVFSFSMYWMVLTLGPILVGA), 185–205 (LLRWLPFILSSSAFVGLYLLV), 215–235 (AVVGAMIAAVLFELSKKGFAA), and 249–269 (ALAAIPILFVWVYLCWLIVLI). The segment at 294–313 (PNNDTELEKDTQRDRFDSES) is disordered. Basic and acidic residues predominate over residues 299–313 (ELEKDTQRDRFDSES).

It belongs to the UPF0761 family.

The protein localises to the cell inner membrane. The chain is UPF0761 membrane protein VV1_0885 from Vibrio vulnificus (strain CMCP6).